A 517-amino-acid polypeptide reads, in one-letter code: 2-isopropylmalate synthase (517 aa).

The Pyruvate carboxyltransferase domain maps to 5–268 (IIIFDTTLRD…DTRINTQEIH (264 aa)). 4 residues coordinate Mn(2+): Asp-14, His-202, His-204, and Asn-238. The regulatory domain stretch occupies residues 393 to 517 (SLDVITSQTI…ADLKSHKISQ (125 aa)).

Belongs to the alpha-IPM synthase/homocitrate synthase family. LeuA type 1 subfamily. As to quaternary structure, homodimer. Mn(2+) serves as cofactor.

The protein localises to the cytoplasm. The enzyme catalyses 3-methyl-2-oxobutanoate + acetyl-CoA + H2O = (2S)-2-isopropylmalate + CoA + H(+). It participates in amino-acid biosynthesis; L-leucine biosynthesis; L-leucine from 3-methyl-2-oxobutanoate: step 1/4. Its function is as follows. Catalyzes the condensation of the acetyl group of acetyl-CoA with 3-methyl-2-oxobutanoate (2-ketoisovalerate) to form 3-carboxy-3-hydroxy-4-methylpentanoate (2-isopropylmalate). This Histophilus somni (strain 129Pt) (Haemophilus somnus) protein is 2-isopropylmalate synthase.